The primary structure comprises 262 residues: Glucosamine-6-phosphate deaminase (262 aa).

Asp-63 acts as the Proton acceptor; for enolization step in catalysis. The For ring-opening step role is filled by Asn-129. His-131 functions as the Proton acceptor; for ring-opening step in the catalytic mechanism. Glu-136 functions as the For ring-opening step in the catalytic mechanism.

This sequence belongs to the glucosamine/galactosamine-6-phosphate isomerase family. NagB subfamily.

It carries out the reaction alpha-D-glucosamine 6-phosphate + H2O = beta-D-fructose 6-phosphate + NH4(+). Its pathway is amino-sugar metabolism; N-acetylneuraminate degradation; D-fructose 6-phosphate from N-acetylneuraminate: step 5/5. Catalyzes the reversible isomerization-deamination of glucosamine 6-phosphate (GlcN6P) to form fructose 6-phosphate (Fru6P) and ammonium ion. This is Glucosamine-6-phosphate deaminase from Bacillus cereus (strain G9842).